The chain runs to 268 residues: Ubiquinone biosynthesis protein COQ4 homolog, mitochondrial (268 aa).

Residues 1-25 (MMQRCLRLQKPLALRRGLHLAQVNS) constitute a mitochondrion transit peptide. Positions 171, 172, 175, and 187 each coordinate Zn(2+).

Belongs to the COQ4 family. As to quaternary structure, component of a multi-subunit COQ enzyme complex. Zn(2+) is required as a cofactor.

It localises to the mitochondrion inner membrane. It catalyses the reaction a 4-hydroxy-3-methoxy-5-(all-trans-polyprenyl)benzoate + H(+) = a 2-methoxy-6-(all-trans-polyprenyl)phenol + CO2. Its pathway is cofactor biosynthesis; ubiquinone biosynthesis. Functionally, lyase that catalyzes the C1-decarboxylation of 4-hydroxy-3-methoxy-5-(all-trans-polyprenyl)benzoic acid into 2-methoxy-6-(all-trans-polyprenyl)phenol during ubiquinone biosynthesis. The chain is Ubiquinone biosynthesis protein COQ4 homolog, mitochondrial from Drosophila simulans (Fruit fly).